The chain runs to 465 residues: Probable tRNA modification GTPase MnmE (465 aa).

Positions 23, 85, and 124 each coordinate (6S)-5-formyl-5,6,7,8-tetrahydrofolate. The TrmE-type G domain occupies 221-384; that stretch reads GTKVCIIGKP…LNNCILDLSS (164 aa). Residues 231–236, 250–256, and 275–278 each bind GTP; these read NVGKSS, TNFPGTT, and DTAG. The Mg(2+) site is built by serine 235 and threonine 256. Lysine 465 serves as a coordination point for (6S)-5-formyl-5,6,7,8-tetrahydrofolate.

It belongs to the TRAFAC class TrmE-Era-EngA-EngB-Septin-like GTPase superfamily. TrmE GTPase family. The cofactor is K(+).

It is found in the plastid. Its subcellular location is the chloroplast. In terms of biological role, exhibits a very high intrinsic GTPase hydrolysis rate. Involved in the addition of a carboxymethylaminomethyl (cmnm) group at the wobble position (U34) of certain tRNAs, forming tRNA-cmnm(5)s(2)U34. This chain is Probable tRNA modification GTPase MnmE, found in Cyanidium caldarium (Red alga).